Consider the following 427-residue polypeptide: Inward rectifier potassium channel 2 (427 aa).

The Cytoplasmic portion of the chain corresponds to 1–81 (MGSVRTNRYS…IFTTCVDIRW (81 aa)). The helical transmembrane segment at 82–106 (RWMLVIFCLTFILSWLFFGCVFWLI) threads the bilayer. Over 107–128 (ALLHGDLENQENNKPCVSQVSS) the chain is Extracellular. Residues 129-140 (FTAAFLFSIETQ) constitute an intramembrane region (helical; Pore-forming). The segment at residues 141–147 (TTIGYGF) is an intramembrane region (pore-forming). A Selectivity filter motif is present at residues 142-147 (TIGYGF). Topologically, residues 148–156 (RCVTDECPI) are extracellular. The helical transmembrane segment at 157 to 178 (AVFMVVFQSIVGCIIDAFIIGA) threads the bilayer. Residues 179–427 (VMAKMAKPKK…PRPLRRESEI (249 aa)) are Cytoplasmic-facing. A polyphosphoinositide (PIP2)-binding region spans residues 181 to 208 (AKMAKPKKRNETLVFSHNAVVAMRDGKL). The disordered stretch occupies residues 386–427 (EEDEIDTGVPESTSTDTHPDMDHHNQAGVPLEPRPLRRESEI). The short motif at 425 to 427 (SEI) is the PDZ-binding element.

This sequence belongs to the inward rectifier-type potassium channel (TC 1.A.2.1) family. KCNJ2 subfamily. In terms of assembly, homotetramer. Homomultimeric and heteromultimeric association with KCNJ4/Kir2.3, resulting in an enhanced G-protein-induced current. Associates, via its PDZ-recognition domain, with a complex containing LIN7A, LIN7B, LIN7C, DLG1, CASK and APBA1. As to expression, found in the apical basilar papilla of the inner ear, brain, muscle, cerebellum, heart and liver.

Its subcellular location is the cell membrane. It is found in the sarcolemma. It localises to the T-tubule. The enzyme catalyses K(+)(in) = K(+)(out). Its activity is regulated as follows. Activated by phosphatidylinositol 4,5 biphosphate (PtdIns(4,5)P2). Inward rectifier potassium channels are characterized by a greater tendency to allow potassium to flow into the cell rather than out of it. Their voltage dependence is regulated by the concentration of extracellular potassium; as external potassium is raised, the voltage range of the channel opening shifts to more positive voltages. The inward rectification is mainly due to the blockage of outward current by internal magnesium. Can be blocked by external barium. Probably participates in establishing action potential waveform and excitability of neuronal and muscle tissues. This is Inward rectifier potassium channel 2 (KCNJ2) from Gallus gallus (Chicken).